The primary structure comprises 688 residues: Phosphatidylinositol 4-phosphate 5-kinase type-1 gamma (688 aa).

Positions 48–71 are disordered; the sequence is GQPGPGHGKKLGHRGVDASGETTY. The PIPK domain maps to 75–443; sequence TSSTLKGAIQ…RFFKFMSSTV (369 aa). N6-acetyllysine is present on residues K265 and K268. The residue at position 459 (R459) is an Asymmetric dimethylarginine; alternate. R459 carries the post-translational modification Omega-N-methylarginine; alternate. The segment covering 525–534 has biased composition (low complexity); it reads TTLSSTSLSI. Disordered regions lie at residues 525–565 and 592–629; these read TTLS…QEEL and GAGV…EEDA. Position 554 is a phosphoserine (S554). Positions 602-623 are enriched in low complexity; sequence ASAAATVEVDAASQASEPASQA. Y635 bears the Phosphotyrosine; by EGFR mark. Residue Y671 is modified to Phosphotyrosine; by CSK. S672 bears the Phosphoserine; by CDK5, MAPK1 and CDK1 mark. Phosphoserine is present on residues S682 and S686. Residue T688 is modified to Phosphothreonine.

Interacts with TLN1. Interacts with TLN2; interaction stimulates 1-phosphatidylinositol-4-phosphate 5-kinase activity. May compete with beta-integrins for the same binding site on TLN1 and TLN2. Interacts with ARF6; interaction stimulates 1-phosphatidylinositol-4-phosphate 5-kinase activity. Interacts with AP2B1. Interacts with AP2M1; phosphorylation of PIP5K1C by CSK disrupts the interaction; clathrin competes with PIP5K1C. Interacts with CDH1. Interacts with CSK. Interacts with PLCG1; interaction is abolished upon EGF stimulation. Interacts with LAPTM4B; promotes SNX5 association with LAPTM4B; kinase activity of PIP5K1C is required; interaction is regulated by phosphatidylinositol 4,5-bisphosphate generated by PIP5K1C. Phosphorylation on Ser-672 negatively regulates binding to TLN2 and is strongly stimulated in mitosis. Phosphorylation on Tyr-671 is necessary for targeting to focal adhesions. Phosphorylation on Ser-672 and Tyr-671 are mutually exclusive. Phosphorylated by SYK and CSK. Tyrosine phosphorylation is enhanced by PTK2 signaling. Phosphorylated at Tyr-635 upon EGF stimulation. Some studies suggest that phosphorylation on Tyr-671 enhances binding to tailins (TLN1 and TLN2); others that phosphorylation at Tyr-671 does not directly enhance binding to tailins (TLN1 and TLN2) but may act indirectly by inhibiting phosphorylation at Ser-672. Post-translationally, acetylation at Lys-265 and Lys-268 seems to decrease lipid kinase activity. Deacetylation of these sites by SIRT1 positively regulates the exocytosis of TSH-containing granules from pituitary cells.

Its subcellular location is the cell membrane. The protein resides in the endomembrane system. The protein localises to the cytoplasm. It is found in the cell junction. It localises to the focal adhesion. Its subcellular location is the adherens junction. The protein resides in the cell projection. The protein localises to the ruffle membrane. It is found in the phagocytic cup. It localises to the uropodium. It catalyses the reaction a 1,2-diacyl-sn-glycero-3-phospho-(1D-myo-inositol 4-phosphate) + ATP = a 1,2-diacyl-sn-glycero-3-phospho-(1D-myo-inositol-4,5-bisphosphate) + ADP + H(+). The catalysed reaction is 1-octadecanoyl-2-(5Z,8Z,11Z,14Z)-eicosatetraenoyl-sn-glycero-3-phospho-1D-myo-inositol 4-phosphate + ATP = 1-octadecanoyl-2-(5Z,8Z,11Z,14Z)-eicosatetraenoyl-sn-glycero-3-phospho-1D-myo-inositol 4,5-bisphosphate + ADP + H(+). It carries out the reaction 1-octadecanoyl-2-(9Z)-octadecenoyl-sn-glycero-3-phospho-1D-myo-inositol 4-phosphate + ATP = 1-octadecanoyl-2-(9Z)-octadecenoyl-sn-glycero-3-phospho-1D-myo-inositol 4,5-bisphosphate + ADP + H(+). The enzyme catalyses 1-octadecanoyl-2-(9Z)-octadecenoyl-sn-glycero-3-phospho-1D-myo-inositol + ATP = 1-octadecanoyl-2-(9Z)-octadecenoyl-sn-glycero-3-phospho-1D-myo-inositol 5-phosphate + ADP + H(+). It catalyses the reaction 1-octadecanoyl-2-(9Z,12Z)-octadecadienoyl-sn-glycero-3-phospho-1D-myo-inositol + ATP = 1-octadecanoyl-2-(9Z,12Z)-octadecadienoyl-sn-glycero-3-phospho-1D-myo-inositol 5-phosphate + ADP + H(+). The catalysed reaction is 1-octadecanoyl-2-(5Z,8Z,11Z,14Z-eicosatetraenoyl)-sn-glycero-3-phospho-(1D-myo-inositol) + ATP = 1-octadecanoyl-2-(5Z,8Z,11Z,14Z)-eicosatetraenoyl-sn-glycero-3-phospho-1D-myo-inositol 5-phosphate + ADP + H(+). It carries out the reaction 1,2-di-(9Z,12Z)-octadecadienoyl-sn-glycero-3-phospho-1D-myo-inositol + ATP = 1,2-di(9Z,12Z)-octadecadienoyl-sn-glycero-3-phospho-1D-myo-inositol 5-phosphate + ADP + H(+). Functionally, catalyzes the phosphorylation of phosphatidylinositol 4-phosphate (PtdIns(4)P/PI4P) to form phosphatidylinositol 4,5-bisphosphate (PtdIns(4,5)P2/PIP2), a lipid second messenger that regulates several cellular processes such as signal transduction, vesicle trafficking, actin cytoskeleton dynamics, cell adhesion, and cell motility. PtdIns(4,5)P2 can directly act as a second messenger or can be utilized as a precursor to generate other second messengers: inositol 1,4,5-trisphosphate (IP3), diacylglycerol (DAG) or phosphatidylinositol-3,4,5-trisphosphate (PtdIns(3,4,5)P3/PIP3). PIP5K1A-mediated phosphorylation of PtdIns(4)P is the predominant pathway for PtdIns(4,5)P2 synthesis. Together with PIP5K1A, is required for phagocytosis, both enzymes regulating different types of actin remodeling at sequential steps. Promotes particle attachment by generating the pool of PtdIns(4,5)P2 that induces controlled actin depolymerization to facilitate Fc-gamma-R clustering. Mediates RAC1-dependent reorganization of actin filaments. Required for synaptic vesicle transport. Controls the plasma membrane pool of PtdIns(4,5)P2 implicated in synaptic vesicle endocytosis and exocytosis. Plays a role in endocytosis mediated by clathrin and AP-2 (adaptor protein complex 2). Required for clathrin-coated pits assembly at the synapse. Participates in cell junction assembly. Modulates adherens junctions formation by facilitating CDH1/cadherin trafficking. Required for focal adhesion dynamics. Modulates the targeting of talins (TLN1 and TLN2) to the plasma membrane and their efficient assembly into focal adhesions. Regulates the interaction between talins (TLN1 and TLN2) and beta-integrins. Required for uropodium formation and retraction of the cell rear during directed migration. Has a role in growth factor-stimulated directional cell migration and adhesion. Required for talin assembly into nascent adhesions forming at the leading edge toward the direction of the growth factor. Negative regulator of T-cell activation and adhesion. Negatively regulates integrin alpha-L/beta-2 (LFA-1) polarization and adhesion induced by T-cell receptor. Together with PIP5K1A has a role during embryogenesis and together with PIP5K1B may have a role immediately after birth. In Rattus norvegicus (Rat), this protein is Phosphatidylinositol 4-phosphate 5-kinase type-1 gamma.